The chain runs to 355 residues: Class E basic helix-loop-helix protein 22 (355 aa).

Disordered regions lie at residues 34–90 and 128–215; these read AFRS…GGGG and GRGS…KEQK. Composition is skewed to gly residues over residues 81–90 and 185–207; these read GGGGASGGGG and GGSGLPPGGPTSGGGSGGGGGGS. The bHLH domain occupies 216–270; the sequence is ALRLNINARERRRMHDLNDALDELRAVIPYAHSPSVRKLSKIATLLLAKNYILMQ.

As to quaternary structure, interacts with PRDM8. As to expression, brain-specific, with the highest expression in the cerebellum.

It localises to the nucleus. In terms of biological role, inhibits DNA binding of TCF3/E47 homodimers and TCF3 (E47)/NEUROD1 heterodimers and acts as a strong repressor of Neurod1 and Myod-responsive genes, probably by heterodimerization with class a basic helix-loop-helix factors. Despite the presence of an intact basic domain, does not bind to DNA. In the brain, may function as an area-specific transcription factor that regulates the postmitotic acquisition of area identities and elucidate the genetic hierarchy between progenitors and postmitotic neurons driving neocortical arealization. May be required for the survival of a specific population of inhibitory neurons in the superficial laminae of the spinal cord dorsal horn that may regulate pruritis. Seems to play a crucial role in the retinogenesis, in the specification of amacrine and bipolar subtypes. Forms with PRDM8 a transcriptional repressor complex controlling genes involved in neural development and neuronal differentiation. The polypeptide is Class E basic helix-loop-helix protein 22 (Bhlhe22) (Mus musculus (Mouse)).